A 101-amino-acid chain; its full sequence is Small ribosomal subunit protein uS14 (101 aa).

It belongs to the universal ribosomal protein uS14 family. Part of the 30S ribosomal subunit. Contacts proteins S3 and S10.

Functionally, binds 16S rRNA, required for the assembly of 30S particles and may also be responsible for determining the conformation of the 16S rRNA at the A site. The chain is Small ribosomal subunit protein uS14 from Marinobacter nauticus (strain ATCC 700491 / DSM 11845 / VT8) (Marinobacter aquaeolei).